The primary structure comprises 408 residues: Protein ZNF365 (408 aa).

Ser16 bears the Phosphoserine mark. A C2H2-type; degenerate zinc finger spans residues 26–51 (FRCPRCGDHTRFRSLSSLRAHLEFSH). A phosphoserine mark is found at Ser139 and Ser146. Residues 170-298 (VEAVDRTIEK…QLEYYQSQQA (129 aa)) adopt a coiled-coil conformation. Position 176 is a phosphothreonine (Thr176). Ser370 carries the post-translational modification Phosphoserine.

As to quaternary structure, homodimer. Interacts with NDE1 and NDEL1. Interacts with DISC1. Interacts with PARP1. Interacts with MCRS1. In terms of tissue distribution, detected in several tissues, with highest levels in brain. Also expressed during embryonic development. Expressed in cerebral cortex, hippocampus, striatum, inferior colliculus and thalamus.

Its subcellular location is the cytoplasm. It is found in the cytoskeleton. It localises to the microtubule organizing center. The protein resides in the centrosome. Contributes to genomic stability by preventing telomere dysfunction. Involved in the morphogenesis of basket cells in the somatosensory cortex during embryogenesis. Involved in the positive regulation of oligodendrocyte differentiation during postnatal growth. Involved in dendritic arborization, morphogenesis of spine density dendrite, and establishment of postsynaptic dendrite density in cortical pyramidal neurons. Involved in the regulation of neurogenesis. Negatively regulates neurite outgrowth. Involved in homologous recombination (HR) repair pathway. Required for proper resolution of DNA double-strand breaks (DSBs) by HR. Is required for recovery of stalled replication forks, and directly contributes to genomic stability. Interacts with PARP1 and mediates MRE11-dependent DNA end resection during replication fork recovery. This chain is Protein ZNF365 (Znf365), found in Mus musculus (Mouse).